Here is a 288-residue protein sequence, read N- to C-terminus: Leucine-rich repeat-containing protein 72 (288 aa).

LRR repeat units lie at residues 47–68 (DVFE…SRFK), 69–90 (KLKY…TRNY), 91–112 (CLAE…HYLP), and 113–134 (SLHI…VKEL). Positions 148–186 (NPLCQYNLYRLYIIYHLPGVELLDRNQVTEKERRSMITL) constitute an LRRCT domain.

The polypeptide is Leucine-rich repeat-containing protein 72 (LRRC72) (Bos taurus (Bovine)).